The chain runs to 756 residues: Polyribonucleotide nucleotidyltransferase (756 aa).

Residues Asp-532 and Asp-538 each coordinate Mg(2+). Residues 598-657 (PRVTAIKVPVDKIGEVIGPKGKMINSITEQTGANISIEDDGTVFVGATDGPSAQAAIDMI) enclose the KH domain. In terms of domain architecture, S1 motif spans 669–738 (GERFLGTVVK…ARGKISLIPV (70 aa)).

Belongs to the polyribonucleotide nucleotidyltransferase family. Requires Mg(2+) as cofactor.

Its subcellular location is the cytoplasm. It carries out the reaction RNA(n+1) + phosphate = RNA(n) + a ribonucleoside 5'-diphosphate. Its function is as follows. Involved in mRNA degradation. Catalyzes the phosphorolysis of single-stranded polyribonucleotides processively in the 3'- to 5'-direction. The sequence is that of Polyribonucleotide nucleotidyltransferase from Rhodococcus erythropolis (strain PR4 / NBRC 100887).